The sequence spans 255 residues: 5'-nucleotidase SurE (255 aa).

A divalent metal cation-binding residues include aspartate 13, aspartate 14, serine 44, and asparagine 100.

This sequence belongs to the SurE nucleotidase family. A divalent metal cation is required as a cofactor.

The protein localises to the cytoplasm. The catalysed reaction is a ribonucleoside 5'-phosphate + H2O = a ribonucleoside + phosphate. Nucleotidase that shows phosphatase activity on nucleoside 5'-monophosphates. In Bacteroides fragilis (strain ATCC 25285 / DSM 2151 / CCUG 4856 / JCM 11019 / LMG 10263 / NCTC 9343 / Onslow / VPI 2553 / EN-2), this protein is 5'-nucleotidase SurE.